The chain runs to 233 residues: Large ribosomal subunit protein uL3 (233 aa).

Belongs to the universal ribosomal protein uL3 family. In terms of assembly, part of the 50S ribosomal subunit. Forms a cluster with proteins L14 and L19.

Its function is as follows. One of the primary rRNA binding proteins, it binds directly near the 3'-end of the 23S rRNA, where it nucleates assembly of the 50S subunit. In Ureaplasma urealyticum serovar 10 (strain ATCC 33699 / Western), this protein is Large ribosomal subunit protein uL3.